The following is an 833-amino-acid chain: MTDNQEIKPKKLTLGNSKLSLNKSFDSLTGAQSFVNAKSKTLVEVRKSSIGSTTTISLNKERNNLDQTVIDANKEEFNRRLSILKKAAEQSKLNDPSQISTLSKLASINQSTNLKIETLETDKEVAQKRQNITENKVEVSAKIVQGDEDILSQIYKKKAETFVKSPLVGMRTRYSIESEKESDKTAESKVVVQKIKLEEPKKFKKVDLFNMLSDDESGSGRTRTRSLASIKRAREKEKRKLVLQAPEKVYREVTIPEVIGVGDLANAMSERVADVIKELMNLGILANASQVIDADTAELVATNLGHKVKRVQESDVENVLISDDKVEDLRTRAPVVTVMGHVDHGKTSLLDALKSTDIAAGEIGGITQHIGAYRVTLADGRAITFIDTPGHEAFSEMRSRGTKVTDIAIIVVAADDGIKTQTVEAINHAKVAGVPIIIAINKIDKPNIDIERVKNELYIHEIIGEEAGGDVMVIPISALKKINLDKLEEAILLIAEMQDLKASPFGSAAGVVIESKIEKGRGTLTTILVQRGTLKNGDIIIAGTSYGKVKKMTNDKGLEIAEATPSVPVEIQGLNEVPFAGVKFNVVQNEKQAKDIAEYRMRLAKEKKISIAPRSSLEDLFLKASGNSKIKELPLIIKGDVHGSVEAILGSLLKLPSDEIKLRILHSGVGPITESDISLAHASSAIIVGFNVRAGVNALTAAEKAKIDIRYYSIIYNLIDDVKAIMSGMLDPIVREQYIGSVEIRRVFNVTKVGKIAGSYVTKGIIKKGADVRLLRDNIVIHEGKLKTLKRFKDEVKEVREGYECGIAFENYEDIRENDVVEVFELIQEQRQL.

The tr-type G domain occupies 331–501 (TRAPVVTVMG…LLIAEMQDLK (171 aa)). A G1 region spans residues 340 to 347 (GHVDHGKT). 340 to 347 (GHVDHGKT) contacts GTP. Positions 365 to 369 (GITQH) are G2. Positions 387 to 390 (DTPG) are G3. Residues 387-391 (DTPGH) and 441-444 (NKID) contribute to the GTP site. The tract at residues 441-444 (NKID) is G4. The segment at 477 to 479 (SAL) is G5.

The protein belongs to the TRAFAC class translation factor GTPase superfamily. Classic translation factor GTPase family. IF-2 subfamily.

It is found in the cytoplasm. Functionally, one of the essential components for the initiation of protein synthesis. Protects formylmethionyl-tRNA from spontaneous hydrolysis and promotes its binding to the 30S ribosomal subunits. Also involved in the hydrolysis of GTP during the formation of the 70S ribosomal complex. The chain is Translation initiation factor IF-2 from Rickettsia canadensis (strain McKiel).